We begin with the raw amino-acid sequence, 148 residues long: Small ribosomal subunit protein uS13 (148 aa).

It belongs to the universal ribosomal protein uS13 family. In terms of assembly, part of the 30S ribosomal subunit. Forms a loose heterodimer with protein S19. Forms two bridges to the 50S subunit in the 70S ribosome.

Its function is as follows. Located at the top of the head of the 30S subunit, it contacts several helices of the 16S rRNA. In the 70S ribosome it contacts the 23S rRNA (bridge B1a) and protein L5 of the 50S subunit (bridge B1b), connecting the 2 subunits; these bridges are implicated in subunit movement. The chain is Small ribosomal subunit protein uS13 from Pyrococcus abyssi (strain GE5 / Orsay).